A 193-amino-acid chain; its full sequence is Selenoprotein S A (193 aa).

Residues 29–49 traverse the membrane as a helical segment; sequence WALASYGWYILFGCIILYFLI. The span at 114–125 shows a compositional bias: basic and acidic residues; sequence IETWDRMQEGKS. Positions 114–193 are disordered; it reads IETWDRMQEG…RRGPSSGGUG (80 aa). Residues 137-153 are compositionally biased toward low complexity; the sequence is SPSTSASSSPSTSSSAP. A non-standard amino acid (selenocysteine) is located at residue Sec192.

Belongs to the selenoprotein S family.

The protein localises to the endoplasmic reticulum membrane. Its subcellular location is the cytoplasm. In terms of biological role, involved in the degradation process of misfolded endoplasmic reticulum (ER) luminal proteins. Participates in the transfer of misfolded proteins from the ER to the cytosol, where they are destroyed by the proteasome in a ubiquitin-dependent manner. The chain is Selenoprotein S A (vimp-a) from Xenopus laevis (African clawed frog).